The chain runs to 182 residues: UPF0397 protein BCG9842_B2659 (182 aa).

Helical transmembrane passes span 9-29, 40-60, 71-91, 114-134, and 142-162; these read VVAIGIGAALYGILGLWGFSI, AILTVFGALFGPVAGLLIGLI, WGIWWGWVISSGIIGFSMGLI, ITGLVGIVIAIIFAGAFDIIV, and IVIQVLGATISDVIVFLVLGL.

Belongs to the UPF0397 family.

Its subcellular location is the cell membrane. The chain is UPF0397 protein BCG9842_B2659 from Bacillus cereus (strain G9842).